The chain runs to 427 residues: Putative F-box/FBD/LRR-repeat protein At4g13965 (427 aa).

Residues 13–61 (ADRISQLPEALIIQILSLLPTEVAVTTSVLSKQWQFLWKMLPKLNFDSL) enclose the F-box domain. 6 LRR repeats span residues 67–93 (FKTF…HLIV), 98–122 (CNSM…VLEV), 141–168 (TLEL…HLHY), 169–194 (VDFK…VVHR), 213–241 (LTIY…KIVG), and 258–284 (SMIV…FLEF). The 51-residue stretch at 346 to 396 (KWNKPKIVPECLLFHLETFMWKGYEWKRNDETEVAKYILSNTNRLKRATFF) folds into the FBD domain.

The polypeptide is Putative F-box/FBD/LRR-repeat protein At4g13965 (Arabidopsis thaliana (Mouse-ear cress)).